Consider the following 346-residue polypeptide: Tetraacyldisaccharide 4'-kinase (346 aa).

54–61 is an ATP binding site; that stretch reads TVGGAGKT.

This sequence belongs to the LpxK family.

It carries out the reaction a lipid A disaccharide + ATP = a lipid IVA + ADP + H(+). Its pathway is glycolipid biosynthesis; lipid IV(A) biosynthesis; lipid IV(A) from (3R)-3-hydroxytetradecanoyl-[acyl-carrier-protein] and UDP-N-acetyl-alpha-D-glucosamine: step 6/6. Functionally, transfers the gamma-phosphate of ATP to the 4'-position of a tetraacyldisaccharide 1-phosphate intermediate (termed DS-1-P) to form tetraacyldisaccharide 1,4'-bis-phosphate (lipid IVA). In Sinorhizobium medicae (strain WSM419) (Ensifer medicae), this protein is Tetraacyldisaccharide 4'-kinase.